Reading from the N-terminus, the 334-residue chain is Methionine import ATP-binding protein MetN (334 aa).

One can recognise an ABC transporter domain in the interval Val-7 to Val-246. Gly-43–Ser-50 is a binding site for ATP.

This sequence belongs to the ABC transporter superfamily. Methionine importer (TC 3.A.1.24) family. The complex is composed of two ATP-binding proteins (MetN), two transmembrane proteins (MetI) and a solute-binding protein (MetQ).

The protein resides in the cell membrane. It carries out the reaction L-methionine(out) + ATP + H2O = L-methionine(in) + ADP + phosphate + H(+). The enzyme catalyses D-methionine(out) + ATP + H2O = D-methionine(in) + ADP + phosphate + H(+). Its function is as follows. Part of the ABC transporter complex MetNIQ involved in methionine import. Responsible for energy coupling to the transport system. The protein is Methionine import ATP-binding protein MetN of Nocardia farcinica (strain IFM 10152).